The chain runs to 897 residues: Translation initiation factor IF-2 (897 aa).

Residues 52-310 (EHGSAPDKLT…LLQQGFQKPA (259 aa)) are disordered. Positions 68 to 82 (STLNVPGTGGKSKSV) are enriched in polar residues. 2 stretches are compositionally biased toward basic and acidic residues: residues 85–159 (EVRK…KDKV) and 166–217 (EMTK…ENEK). Over residues 256 to 272 (GRTRTASKTARPQKKGN) the composition is skewed to basic residues. A compositionally biased stretch (basic and acidic residues) spans 273–286 (KHAESKADREEARA). One can recognise a tr-type G domain in the interval 396–565 (PRAPVVTIMG…LLQAEVLELK (170 aa)). The segment at 405–412 (GHVDHGKT) is G1. Position 405-412 (405-412 (GHVDHGKT)) interacts with GTP. The tract at residues 430–434 (GITQH) is G2. The interval 451–454 (DTPG) is G3. Residues 451 to 455 (DTPGH) and 505 to 508 (NKID) each bind GTP. The interval 505-508 (NKID) is G4. Residues 541–543 (SAK) are G5.

This sequence belongs to the TRAFAC class translation factor GTPase superfamily. Classic translation factor GTPase family. IF-2 subfamily.

It is found in the cytoplasm. Its function is as follows. One of the essential components for the initiation of protein synthesis. Protects formylmethionyl-tRNA from spontaneous hydrolysis and promotes its binding to the 30S ribosomal subunits. Also involved in the hydrolysis of GTP during the formation of the 70S ribosomal complex. The protein is Translation initiation factor IF-2 (infB) of Enterobacter cloacae.